The sequence spans 427 residues: MRHLFNTDAEIYEAIVKEYERQFYHLELIASENFTSLAVMEAQGSVMTNKYAEGLPHKRYYGGCEFVDIAEDLAIERAKALFDAEHANVQPHSGTQANMAVYMAVLKPGDTIMGMDLSHGGHLTHGAKVNFSGKIYNAVYYGVHPETHLIDYDQLYRLAKEHKPKLIVGGASAYPRVIDWAKLREIADSVGAYLMVDMAHYAGLIAGGVYPNPVPYAHFVTSTTHKTLRGPRSGFILCKKEFAKDIDKSVFPGIQGGPLMHVIAAKAVAFKEAMSQEFKEYARQVVANARVLAEEFIKEGFKVVSGGTDSHIVLLDLRDTGLTGREVEEALGKANITVNKNAVPFDPLPPVKTSGIRLGTPAMTTRGMKEDQMRIIARLISKVIKNIGDEKVIEYVRQEVIEMCEQFPLYPELREEINHLAKIKATY.

Residues L117 and 121 to 123 (GHL) contribute to the (6S)-5,6,7,8-tetrahydrofolate site. Position 226 is an N6-(pyridoxal phosphate)lysine (K226).

Belongs to the SHMT family. Homodimer. It depends on pyridoxal 5'-phosphate as a cofactor.

The protein localises to the cytoplasm. The enzyme catalyses (6R)-5,10-methylene-5,6,7,8-tetrahydrofolate + glycine + H2O = (6S)-5,6,7,8-tetrahydrofolate + L-serine. It carries out the reaction L-threonine = acetaldehyde + glycine. It catalyses the reaction L-allo-threonine = acetaldehyde + glycine. It functions in the pathway one-carbon metabolism; tetrahydrofolate interconversion. Its pathway is amino-acid biosynthesis; glycine biosynthesis; glycine from L-serine: step 1/1. Functionally, its primary function is to catalyze the reversible interconversion of serine and glycine with tetrahydrofolate (THF) serving as the one-carbon carrier. This reaction serves as the major source of one-carbon groups required for the biosynthesis of purines, thymidylate, methionine, and other important biomolecules. Also exhibits THF-independent aldolase activity toward beta-hydroxyamino acids, producing glycine and aldehydes, via a retro-aldol mechanism. Thus, is able to catalyze the cleavage of L-threonine, L-allo-threonine, L-threo-beta-phenylserine and L-erythro-beta-phenylserine. This second activity is likely to be physiological in H.thermophilus, which is an organism that lacks the ortholog gene for the 'real' threonine aldolase characterized in mesophilic bacteria (LtaE), yeast and plants. In Hydrogenobacter thermophilus (strain DSM 6534 / IAM 12695 / TK-6), this protein is Serine hydroxymethyltransferase.